The chain runs to 471 residues: tRNA(Ile)-lysidine synthase (471 aa).

Ser-27–Ser-32 provides a ligand contact to ATP.

This sequence belongs to the tRNA(Ile)-lysidine synthase family.

Its subcellular location is the cytoplasm. It carries out the reaction cytidine(34) in tRNA(Ile2) + L-lysine + ATP = lysidine(34) in tRNA(Ile2) + AMP + diphosphate + H(+). Functionally, ligates lysine onto the cytidine present at position 34 of the AUA codon-specific tRNA(Ile) that contains the anticodon CAU, in an ATP-dependent manner. Cytidine is converted to lysidine, thus changing the amino acid specificity of the tRNA from methionine to isoleucine. In Dehalococcoides mccartyi (strain CBDB1), this protein is tRNA(Ile)-lysidine synthase.